Here is a 605-residue protein sequence, read N- to C-terminus: Kelch-like protein 26 (605 aa).

The region spanning 53–120 (LDVVLAIDNE…AYSSEVTLDL (68 aa)) is the BTB domain. In terms of domain architecture, BACK spans 155–256 (CLNIGQMATT…RSSELVDSVQ (102 aa)). Kelch repeat units follow at residues 300 to 351 (SLIT…VLDN), 352 to 403 (FVYV…VLDG), 404 to 450 (QLYA…TCGD), 452 to 498 (LYIS…SANN), 499 to 549 (RIYA…LLDK), and 551 to 598 (IYIV…PIIL).

Its function is as follows. May play a role in endo(sarco)plasmic reticulum (ER/SR) mitochondrial signaling. May be part of the ubiquitin-proteasome system (UPS) and affect ubiquitination and degradation of target substrates. This chain is Kelch-like protein 26 (klhl26), found in Danio rerio (Zebrafish).